A 544-amino-acid chain; its full sequence is WD repeat-containing protein 25 (544 aa).

Disordered regions lie at residues 17-74 (DSDS…EDPG) and 183-208 (QRQALSTETGKGKDVEPQGPPAGRAP). Residues 30–39 (FNATGQQKDT) show a composition bias toward polar residues. WD repeat units follow at residues 244–286 (GHRG…HCLQ), 290–329 (LHTEAVRAARWAPCGRRILSGGFDFALHLTDLETGTQLFS), 330–373 (GRSD…RSYK), 375–420 (TIQQ…KISN), 424–463 (HERFTCPSLALHPREPVFLAQTNGNYLALFSTVWPYRMSR), 469–510 (GHKV…RACT), and 513–544 (GHTQACVGTTYHPVLPSVLATCSWGGDMKIWH).

Expressed in heart, muscle, testis, ovary, uterus and prostate.

The chain is WD repeat-containing protein 25 from Homo sapiens (Human).